The following is a 476-amino-acid chain: Zinc finger protein 563 (476 aa).

In terms of domain architecture, KRAB spans 4–96 (VAFEDVAVNF…IRDSIVNNSI (93 aa)). The C2H2-type 1; degenerate zinc finger occupies 101–125 (DPCQSAECEEVIMGHLSLNSHIRVD). Residues 169-191 (YECKECGKTFSSRRNLRRHMVVQ) form a C2H2-type 2; degenerate zinc finger. C2H2-type zinc fingers lie at residues 197–219 (YKCK…ERTH), 225–247 (YECK…ERMH), 253–275 (YECK…ERTH), 281–303 (YTCK…ETTH), 309–331 (YECK…MKRH), 337–359 (HKCK…ERIH), 365–387 (YECK…MIMH), 393–415 (HKCK…EKSH), 421–443 (YECK…MVMH), and 449–471 (NKCK…EKTH).

It belongs to the krueppel C2H2-type zinc-finger protein family.

The protein localises to the nucleus. May be involved in transcriptional regulation. The chain is Zinc finger protein 563 (ZNF563) from Homo sapiens (Human).